The following is a 589-amino-acid chain: Netrin-G2 (589 aa).

The first 17 residues, 1-17 (MLRLLALFLHCLPLVSG), serve as a signal peptide directing secretion. 3 cysteine pairs are disulfide-bonded: Cys-22–Cys-39, Cys-61–Cys-81, and Cys-69–Cys-77. The Laminin N-terminal domain occupies 35 to 286 (EFYACQPKVM…AISNIEVIGR (252 aa)). Residues 69–88 (CSHENPYLCSNECDASNPDL) form an NGL discriminant loop I region. Asn-122 and Asn-128 each carry an N-linked (GlcNAc...) asparagine glycan. A disulfide bridge links Cys-171 with Cys-195. The segment at 201 to 203 (RWA) is NGL discriminant loop II. Residues 264–267 (TYVQ) form an NGL discriminant loop III region. 15 disulfide bridges follow: Cys-287/Cys-296, Cys-289/Cys-305, Cys-307/Cys-316, Cys-319/Cys-344, Cys-413/Cys-422, Cys-415/Cys-433, Cys-436/Cys-445, Cys-448/Cys-466, Cys-469/Cys-481, Cys-471/Cys-487, Cys-489/Cys-498, Cys-501/Cys-511, Cys-516/Cys-529, Cys-523/Cys-535, and Cys-537/Cys-546. Laminin EGF-like domains are found at residues 287–346 (CKCN…ACAA), 413–468 (CECY…VCIE), and 469–513 (CNCN…GCYP). Asn-310 carries N-linked (GlcNAc...) asparagine glycosylation. Asn-455 is a glycosylation site (N-linked (GlcNAc...) asparagine). Asn-482 is a glycosylation site (N-linked (GlcNAc...) asparagine). Gly-566 carries GPI-anchor amidated glycine lipidation. A propeptide spans 567–589 (IVPRPDTLLGCLLLLGLAARLAC) (removed in mature form).

Interacts with LRRC4. N-glycosylated. As to expression, expression is restricted primarily to neurons of the CNS, particularly in the cerebral cortex, habenular nucleus and superior colliculus. Low levels in lung, kidney, heart and spleen.

It is found in the cell membrane. Functionally, involved in controlling patterning and neuronal circuit formation at the laminar, cellular, subcellular and synaptic levels. Promotes neurite outgrowth of both axons and dendrites. This chain is Netrin-G2 (Ntng2), found in Mus musculus (Mouse).